The sequence spans 920 residues: Protein O-mannosyl-transferase TMTC3 (920 aa).

Over 1 to 14 the chain is Cytoplasmic; it reads MLEGKMADINFKEV. A helical transmembrane segment spans residues 15–35; it reads TLIVSVVAACYWNSLFCGFVF. At 36–94 the chain is on the extracellular side; sequence DDVSAILDNKDLHPSTPLKTLFQNDFWGTPMSEERSHKSYRPLTVLTFRLNYLLSELKP. The helical transmembrane segment at 95–115 threads the bilayer; it reads MSYHLLNTVFHAVVSVIFLKV. Over 116–125 the chain is Cytoplasmic; the sequence is CRLFLDKRSS. A run of 2 helical transmembrane segments spans residues 126–144 and 145–163; these read MIAALLFAVHPIHTEAVTG and VVGRAELLSSVFFLAAFLS. Residues 164–171 are Cytoplasmic-facing; it reads YTKSKGPD. Residues 172 to 192 form a helical membrane-spanning segment; that stretch reads NSIVWTPIVLTVFLVAVATLC. Topologically, residues 193-198 are extracellular; sequence KEQGIT. A helical transmembrane segment spans residues 199–219; that stretch reads VVGICCVYEVFVAQGYTLPML. The Cytoplasmic portion of the chain corresponds to 220–236; it reads CTVAGQFLRGKGSIPLS. Residues 237-257 traverse the membrane as a helical segment; it reads MLQTLVKLIVLMLSTLLLVVV. The Extracellular portion of the chain corresponds to 258-325; it reads RVQVIQSQLP…LIESFLDVRN (68 aa). The chain crosses the membrane as a helical span at residues 326-346; sequence LATFAFFCFLGALGIFSLRYP. At 347–358 the chain is on the cytoplasmic side; the sequence is GDSSKTVLMALC. Residues 359–379 traverse the membrane as a helical segment; sequence LMALPFIPASNLFFPVGFVVA. Over 380 to 381 the chain is Extracellular; sequence ER. The chain crosses the membrane as a helical span at residues 382–402; sequence VLYVPSMGFCILVAHGWQKIS. The Cytoplasmic portion of the chain corresponds to 403-409; the sequence is NKSVLKK. The chain crosses the membrane as a helical span at residues 410 to 428; the sequence is LSWVCLSMVILTHALKTLH. Over 429–920 the chain is Extracellular; it reads RNWDWESEYT…EEIERILNGE (492 aa). TPR repeat units follow at residues 451–484, 485–518, 534–567, 568–601, 602–635, 673–706, 707–740, 742–775, and 776–809; these read AKLWNNVGHALENEKNFEKALKYFLQATHVQPDD, IGAHMNVGRTYKNLNRSREAEASYMLAKSLMPQI, NVYINLANLIRANESRLEEADQLYRQAISMRPDF, KQAYISRGELLLKMNKPLKAKEAYLKALELDRNN, ADLWYNLAIVYIELKEPNEALKNFNRALELNPKH, ANGYFNLGMLAMDDKKDSEAESWMKKAIKLQPDF, RSALFNLALLYSQTAKELKALPILEELLKYYPDH, KGLILKGDILMNQKKDIPGAKKCFEKILEMDPSN, and VQGKHNLCVVYFEEKELLKAERCLVETLALAPHE. N-linked (GlcNAc...) asparagine glycosylation occurs at Asn499. Tyr508 carries the post-translational modification Phosphotyrosine. Asn546 carries an N-linked (GlcNAc...) asparagine glycan. The segment at 829–897 is disordered; it reads VEQPLAPADK…APHKTTKDIK (69 aa). The segment covering 840-858 has biased composition (basic and acidic residues); the sequence is PGTEEREEIPSEDVKEISS. The span at 867–880 shows a compositional bias: low complexity; that stretch reads KTNNNRNSKSNKQS. The segment covering 887 to 897 has biased composition (basic and acidic residues); it reads DAPHKTTKDIK.

This sequence belongs to the TMTC family.

It is found in the membrane. The protein localises to the endoplasmic reticulum. It carries out the reaction a di-trans,poly-cis-dolichyl beta-D-mannosyl phosphate + L-seryl-[protein] = 3-O-(alpha-D-mannosyl)-L-seryl-[protein] + a di-trans,poly-cis-dolichyl phosphate + H(+). The catalysed reaction is a di-trans,poly-cis-dolichyl beta-D-mannosyl phosphate + L-threonyl-[protein] = 3-O-(alpha-D-mannosyl)-L-threonyl-[protein] + a di-trans,poly-cis-dolichyl phosphate + H(+). It participates in protein modification; protein glycosylation. Its function is as follows. Transfers mannosyl residues to the hydroxyl group of serine or threonine residues. The 4 members of the TMTC family are O-mannosyl-transferases dedicated primarily to the cadherin superfamily, each member seems to have a distinct role in decorating the cadherin domains with O-linked mannose glycans at specific regions. Also acts as O-mannosyl-transferase on other proteins such as PDIA3. Involved in the positive regulation of proteasomal protein degradation in the endoplasmic reticulum (ER), and the control of ER stress response. This Mus musculus (Mouse) protein is Protein O-mannosyl-transferase TMTC3.